The following is a 344-amino-acid chain: Adenosine kinase (344 aa).

Residue Asp-298 is part of the active site.

Belongs to the carbohydrate kinase PfkB family. Mg(2+) is required as a cofactor.

The enzyme catalyses adenosine + ATP = AMP + ADP + H(+). It functions in the pathway purine metabolism; AMP biosynthesis via salvage pathway; AMP from adenosine: step 1/1. This is Adenosine kinase (ADK) from Schizophyllum commune (Split gill fungus).